Here is a 314-residue protein sequence, read N- to C-terminus: MTDTTILPRPEVSGDFLVAALYHFARLPRFESLREQLFELCQKNGVKGTLLLAAEGINGTIAGPDAGVQAVLSFLRAQPEFAALEHKESRASHMPFVRLKVKLKKEIVTMGVPDIDPNRIVGTYVDPRDWNALISDPDTIVIDTRNDYETAIGVFKGAVDPQTKTFREFPDWVKNNPGLHNKPKIAMYCTGGIRCEKATAFMKEQGFDEVYHLKGGILKYLEEVPEEESLWEGACFVFDERVSVVHGLAEGDHQLCHACRNPITPDVRLSPKFEEGVSCPSCYDERSEDDRQRFRDRQQQIELAKTRGERHLGR.

Residues 135–229 form the Rhodanese domain; that stretch reads SDPDTIVIDT…YLEEVPEEES (95 aa). Catalysis depends on Cys-189, which acts as the Cysteine persulfide intermediate.

The protein belongs to the TrhO family.

It catalyses the reaction uridine(34) in tRNA + AH2 + O2 = 5-hydroxyuridine(34) in tRNA + A + H2O. In terms of biological role, catalyzes oxygen-dependent 5-hydroxyuridine (ho5U) modification at position 34 in tRNAs. The chain is tRNA uridine(34) hydroxylase from Agrobacterium fabrum (strain C58 / ATCC 33970) (Agrobacterium tumefaciens (strain C58)).